Reading from the N-terminus, the 1194-residue chain is Pre-mRNA-processing ATP-dependent RNA helicase prp-5 (1194 aa).

3 disordered regions span residues 1–201, 224–248, and 452–484; these read MARL…KEAK, AVVG…ASPA, and ASGE…DDYG. 2 stretches are compositionally biased toward basic and acidic residues: residues 21–37 and 44–154; these read RKDD…GPVD and SPID…RDQP. Residues 156 to 176 show a composition bias toward polar residues; it reads PGNTTAKENEPAKSTPTQPQT. A compositionally biased stretch (basic and acidic residues) spans 177 to 186; the sequence is EAEKKAERLR. Residues 232–248 are compositionally biased toward low complexity; it reads SPAPASPAAAESPASPA. Over residues 455 to 469 the composition is skewed to basic and acidic residues; sequence EESHSKADTLTEKKN. The Q motif signature appears at 561–589; sequence QKWSQCGLTRPILDTIESLGFEKPTPIQM. Positions 592–770 constitute a Helicase ATP-binding domain; it reads LPVIMSGRDV…KKVLRDPVEI (179 aa). 605–612 contributes to the ATP binding site; that stretch reads AKTGSGKT. Positions 718–721 match the DEAD box motif; sequence DEAD. The Helicase C-terminal domain occupies 797–945; the sequence is RLLELLGELY…PVPDRLNEMR (149 aa). Disordered stretches follow at residues 952–1011 and 1025–1056; these read VKAG…DKTK and DASK…SGGA. 3 stretches are compositionally biased toward basic and acidic residues: residues 967–980, 997–1011, and 1025–1036; these read GLEK…AARM, EDAP…DKTK, and DASKAETEDKHA.

The protein belongs to the DEAD box helicase family. DDX46/PRP5 subfamily.

It is found in the nucleus. The enzyme catalyses ATP + H2O = ADP + phosphate + H(+). Its function is as follows. ATP-dependent RNA helicase involved spliceosome assembly and in nuclear splicing. Catalyzes an ATP-dependent conformational change of U2 snRNP. Bridges U1 and U2 snRNPs and enables stable U2 snRNP association with intron RNA. The polypeptide is Pre-mRNA-processing ATP-dependent RNA helicase prp-5 (prp-5) (Neurospora crassa (strain ATCC 24698 / 74-OR23-1A / CBS 708.71 / DSM 1257 / FGSC 987)).